The sequence spans 370 residues: Ubiquitin-binding protein Rv1468c (370 aa).

The tract at residues 1–72 (MSFVVANTEF…QVLSAQAAAF (72 aa)) is UBA. Positions 1 to 93 (MSFVVANTEF…AQAYAAAEAT (93 aa)) constitute a PE domain.

Belongs to the mycobacterial PE family. PGRS subfamily. As to quaternary structure, interacts directly with host polyubiquitin in a UBA-dependent manner.

It is found in the secreted. It localises to the cell wall. The protein resides in the cell surface. Its function is as follows. Mediates direct binding of host ubiquitin (Ub) to the mycobacterial surface, which triggers host xenophagy. Interaction between Rv1468c and ubiquitin recruits autophagy receptor p62 to deliver mycobacteria into LC3-associated autophagosomes. It could be a viable evolutionary strategy adopted by M.tuberculosis to maintain long-term intracellular survival through self-controlling its intracellular bacterial loads to avoid excessive host inflammatory immune responses. This is Ubiquitin-binding protein Rv1468c from Mycobacterium tuberculosis (strain ATCC 25618 / H37Rv).